The primary structure comprises 240 residues: Anti-H(O) lectin (240 aa).

An N-linked (GlcNAc...) asparagine glycan is attached at asparagine 4. Positions 124 and 126 each coordinate Mn(2+). Residues aspartate 126, tyrosine 128, asparagine 130, and aspartate 133 each coordinate Ca(2+). Aspartate 133 and histidine 141 together coordinate Mn(2+).

The protein belongs to the leguminous lectin family.

L-fucose specific lectin. The chain is Anti-H(O) lectin from Lotus tetragonolobus (Winged pea).